The sequence spans 446 residues: Baeyer-Villiger oxidase mdpL (446 aa).

The protein belongs to the AflY oxidoreductase family. It depends on NADPH as a cofactor.

It functions in the pathway secondary metabolite biosynthesis. In terms of biological role, baeyer-Villiger oxidase; part of the gene cluster that mediates the biosynthesis of monodictyphenone, a prenyl xanthone derivative. The pathway begins with the synthesis of atrochrysone thioester by the polyketide synthase (PKS) mdpG. The atrochrysone carboxyl ACP thioesterase mdpF then breaks the thioester bond and releases the atrochrysone carboxylic acid from mdpG. The atrochrysone carboxylic acid is then converted to atrochrysone which is further transformed into emodin anthrone. The next step is performed by the anthrone oxygenase mdpH that catalyzes the oxidation of emodinanthrone to emodin. Emodin is further modified to yield monodictyphenone via several steps involving mdpB, mdpC mdpJ, mdpK and mdpL. These enzymes with xptA, xptB and xptC are also proposed to be involved in the synthesis of shamixanthone from emodin. Especially, direct reduction of emodin by the short chain dehydrogenase mdpC followed by dehydration catalyzed by the scytalone dehydratase-like protein mdpB gives loss of oxygen and formation of chrysophanol intermediate in two simple steps. In Emericella nidulans (strain FGSC A4 / ATCC 38163 / CBS 112.46 / NRRL 194 / M139) (Aspergillus nidulans), this protein is Baeyer-Villiger oxidase mdpL.